Reading from the N-terminus, the 176-residue chain is MSSHQEPVVLGKLGASHGIKGWLKITSYTDSVEDIFDYSPWLIKEQGEWREVKVAQWRYQGKAIIAALEGVTTRDQAQMLTNCEIAIPAEAMKALPEDEFYWRDLIGCEVVNTKGYKMGKVDQIVETGSNDVLLVKANAKDGFGKTERMIPFVTEQFILEVNLAEKQILVDWDPDF.

One can recognise a PRC barrel domain in the interval Glu97–Phe176.

This sequence belongs to the RimM family. In terms of assembly, binds ribosomal protein uS19.

It is found in the cytoplasm. Functionally, an accessory protein needed during the final step in the assembly of 30S ribosomal subunit, possibly for assembly of the head region. Essential for efficient processing of 16S rRNA. May be needed both before and after RbfA during the maturation of 16S rRNA. It has affinity for free ribosomal 30S subunits but not for 70S ribosomes. The protein is Ribosome maturation factor RimM of Shewanella loihica (strain ATCC BAA-1088 / PV-4).